Reading from the N-terminus, the 393-residue chain is NAD(P)H-quinone oxidoreductase subunit H, chloroplastic (393 aa).

Belongs to the complex I 49 kDa subunit family. NDH is composed of at least 16 different subunits, 5 of which are encoded in the nucleus.

It localises to the plastid. Its subcellular location is the chloroplast thylakoid membrane. The catalysed reaction is a plastoquinone + NADH + (n+1) H(+)(in) = a plastoquinol + NAD(+) + n H(+)(out). The enzyme catalyses a plastoquinone + NADPH + (n+1) H(+)(in) = a plastoquinol + NADP(+) + n H(+)(out). Its function is as follows. NDH shuttles electrons from NAD(P)H:plastoquinone, via FMN and iron-sulfur (Fe-S) centers, to quinones in the photosynthetic chain and possibly in a chloroplast respiratory chain. The immediate electron acceptor for the enzyme in this species is believed to be plastoquinone. Couples the redox reaction to proton translocation, and thus conserves the redox energy in a proton gradient. In Guizotia abyssinica (Niger), this protein is NAD(P)H-quinone oxidoreductase subunit H, chloroplastic.